The primary structure comprises 511 residues: Maturase K (511 aa).

It belongs to the intron maturase 2 family. MatK subfamily.

The protein resides in the plastid. It is found in the chloroplast. Usually encoded in the trnK tRNA gene intron. Probably assists in splicing its own and other chloroplast group II introns. This chain is Maturase K, found in Melica altissima (Siberian melic grass).